The sequence spans 426 residues: Gamma-glutamyl phosphate reductase (426 aa).

Belongs to the gamma-glutamyl phosphate reductase family.

The protein localises to the cytoplasm. It carries out the reaction L-glutamate 5-semialdehyde + phosphate + NADP(+) = L-glutamyl 5-phosphate + NADPH + H(+). The protein operates within amino-acid biosynthesis; L-proline biosynthesis; L-glutamate 5-semialdehyde from L-glutamate: step 2/2. Its function is as follows. Catalyzes the NADPH-dependent reduction of L-glutamate 5-phosphate into L-glutamate 5-semialdehyde and phosphate. The product spontaneously undergoes cyclization to form 1-pyrroline-5-carboxylate. This is Gamma-glutamyl phosphate reductase from Paracidovorax citrulli (strain AAC00-1) (Acidovorax citrulli).